The primary structure comprises 324 residues: tRNA U34 carboxymethyltransferase (324 aa).

Carboxy-S-adenosyl-L-methionine is bound by residues Lys92, Trp106, Lys111, Gly131, 181–182, Met197, Tyr201, and Arg316; that span reads LE.

It belongs to the class I-like SAM-binding methyltransferase superfamily. CmoB family. In terms of assembly, homotetramer.

The catalysed reaction is carboxy-S-adenosyl-L-methionine + 5-hydroxyuridine(34) in tRNA = 5-carboxymethoxyuridine(34) in tRNA + S-adenosyl-L-homocysteine + H(+). Its function is as follows. Catalyzes carboxymethyl transfer from carboxy-S-adenosyl-L-methionine (Cx-SAM) to 5-hydroxyuridine (ho5U) to form 5-carboxymethoxyuridine (cmo5U) at position 34 in tRNAs. This chain is tRNA U34 carboxymethyltransferase, found in Syntrophotalea carbinolica (strain DSM 2380 / NBRC 103641 / GraBd1) (Pelobacter carbinolicus).